We begin with the raw amino-acid sequence, 273 residues long: NAD(P)H-hydrate epimerase (273 aa).

The YjeF N-terminal domain maps to 52–260 (AQQIDQELFN…GIIQKYELNL (209 aa)). Position 105–109 (105–109 (NNGGD)) interacts with (6S)-NADPHX. Residues N106 and D170 each coordinate K(+). Residues 174 to 180 (GFSFKGE) and D203 contribute to the (6S)-NADPHX site. K(+) is bound at residue S206.

The protein belongs to the NnrE/AIBP family. Requires K(+) as cofactor.

It carries out the reaction (6R)-NADHX = (6S)-NADHX. The catalysed reaction is (6R)-NADPHX = (6S)-NADPHX. Catalyzes the epimerization of the S- and R-forms of NAD(P)HX, a damaged form of NAD(P)H that is a result of enzymatic or heat-dependent hydration. This is a prerequisite for the S-specific NAD(P)H-hydrate dehydratase to allow the repair of both epimers of NAD(P)HX. In Branchiostoma floridae (Florida lancelet), this protein is NAD(P)H-hydrate epimerase.